The chain runs to 682 residues: Probable glycosyl transferase Gly (682 aa).

UDP contacts are provided by residues 21–26 (CASFSD) and 112–113 (DC). Mn(2+)-binding residues include D112, D114, and H230. 230 to 236 (HYLPERK) serves as a coordination point for UDP.

Belongs to the glycosyltransferase 8 family. As to quaternary structure, part of the accessory SecA2/SecY2 protein translocation apparatus required to export cell wall protein GspB.

Part of the accessory SecA2/SecY2 system specifically required to export GspB, a serine-rich repeat cell wall protein encoded upstream in the same operon. This Streptococcus gordonii protein is Probable glycosyl transferase Gly (gly).